The following is a 481-amino-acid chain: Glutamyl-tRNA(Gln) amidotransferase subunit A (481 aa).

Catalysis depends on charge relay system residues Lys-74 and Ser-149. Ser-173 (acyl-ester intermediate) is an active-site residue.

It belongs to the amidase family. GatA subfamily. In terms of assembly, heterotrimer of A, B and C subunits.

It carries out the reaction L-glutamyl-tRNA(Gln) + L-glutamine + ATP + H2O = L-glutaminyl-tRNA(Gln) + L-glutamate + ADP + phosphate + H(+). In terms of biological role, allows the formation of correctly charged Gln-tRNA(Gln) through the transamidation of misacylated Glu-tRNA(Gln) in organisms which lack glutaminyl-tRNA synthetase. The reaction takes place in the presence of glutamine and ATP through an activated gamma-phospho-Glu-tRNA(Gln). This Francisella tularensis subsp. holarctica (strain FTNF002-00 / FTA) protein is Glutamyl-tRNA(Gln) amidotransferase subunit A.